The chain runs to 521 residues: Vang-like protein 2-B (521 aa).

The segment covering methionine 1–arginine 18 has biased composition (low complexity). The disordered stretch occupies residues methionine 1–threonine 73. At methionine 1–glycine 108 the chain is on the cytoplasmic side. A compositionally biased stretch (basic residues) spans serine 19–lysine 33. Residues glutamate 57–asparagine 67 are compositionally biased toward basic and acidic residues. A helical transmembrane segment spans residues valine 109 to leucine 129. At proline 130–glycine 147 the chain is on the extracellular side. The chain crosses the membrane as a helical span at residues leucine 148–phenylalanine 168. At arginine 169–valine 178 the chain is on the cytoplasmic side. The chain crosses the membrane as a helical span at residues phenylalanine 179 to phenylalanine 199. Residues tyrosine 200–tyrosine 218 lie on the Extracellular side of the membrane. Residues alanine 219 to leucine 239 traverse the membrane as a helical segment. Residues arginine 240 to valine 521 are Cytoplasmic-facing. A PDZ-binding motif is present at residues glutamate 518–valine 521.

It belongs to the Vang family. As to quaternary structure, interacts with dvl/dsh. Interacts with prickle3. As to expression, during gastrulation, broadly expressed in the dorsal region in both mesodermal and neural tissues. From the neurula stages, expressed throughout the neural tube. In tailbud stages, expression declines in the anterior notochord but remains strong in the posterior notochord and in the neural tube. Also weakly expressed in the prenephritic region of late tailbud embryos.

It localises to the cell membrane. Its function is as follows. Has a role in non-canonical Wnt/planar cell polarity (PCP) signaling; can recruit dvl/dsh and prickle from the cytoplasm to the plasma membrane. Acts in a PCP complex to regulate the polarized assembly of fibronectrin on the surface of the mesoderm during gastrulation. Regulates convergent extension in both dorsal mesoderm and neural tissue without affecting cell fate. Regulates neural fold closure during neurulation. May be required for cell surface localization of fzd3 and fzd6 in the inner ear. In Xenopus laevis (African clawed frog), this protein is Vang-like protein 2-B (vangl2-b).